The primary structure comprises 771 residues: Receptor like protein 22 (771 aa).

The signal sequence occupies residues 1–20 (MSNLRLRLLSLVSILYCIAA). Residues 21-729 (LRCRPDQTET…EEEEILEWRA (709 aa)) lie on the Extracellular side of the membrane. Residues Asn46, Asn58, Asn80, Asn93, Asn134, and Asn158 are each glycosylated (N-linked (GlcNAc...) asparagine). LRR repeat units follow at residues 86-110 (LSHLRYLNLSFNNFDSSPLSSAFGQ), 112-135 (NNLEVLLLSSNGFTGQVPSSIRNL), 136-159 (TKLTQLNLPHNKLTGDLPSLVQNL), 160-183 (TKLLALDLSYNQFSGTIPSSFFTM), 185-206 (FLSYLDLSENHLTGSFEISNSS), 207-230 (SKLENLNLGNNHFETEIIDPVLRL), 232-254 (NLRYLSLSFLNTSHPIDLSIFSP), 255-281 (LQSLTHLDLHGNSLTLTSVYSDIDFPK), 283-303 (MEILLLSGCNISEFPRFLKSL), 304-327 (KKLWYLDLSSNRIKGNVPDWIWSL), 329-350 (LLVSLDLSNNSFTGFNGSLDHV), and 353-377 (NSSVQVLDIALNSFKGSFPNPPVSI). An N-linked (GlcNAc...) asparagine glycan is attached at Asn204. A glycan (N-linked (GlcNAc...) asparagine) is linked at Asn242. Residue Asn292 is glycosylated (N-linked (GlcNAc...) asparagine). N-linked (GlcNAc...) asparagine glycosylation is found at Asn337, Asn344, Asn353, Asn379, Asn384, Asn397, Asn410, Asn421, Asn466, and Asn481. Residues 378–397 (INLSAWNNSFTGDIPLSVCN) form an LRR 13; degenerate repeat. LRR repeat units follow at residues 398–419 (RTSLDVLDLSYNNFTGSIPPCM), 420–443 (GNFTIVNLRKNKLEGNIPDEFYSG), 445–467 (LTQTLDVGYNQLTGELPRSLLNC), 469–491 (FIRFLSVDHNRINDSFPLWLKAL), 492–516 (PNLKVLTLRSNSFHGPMSPPDDQSS), 519–543 (FPKLQILEISHNRFTGSLPTNYFAN), 588–612 (LTFYSAIDFSGNKLEGEIPESIGLL), 613–636 (KTLIALNLSNNSFTGHIPMSFANV), 637–660 (TELESLDLSGNKLSGEIPQELGRL), and 662–685 (YLAYIDVSDNQLTGKIPQGTQIIG). The N-linked (GlcNAc...) asparagine glycan is linked to Asn543. N-linked (GlcNAc...) asparagine glycans are attached at residues Asn619, Asn622, and Asn635. The helical transmembrane segment at 730–750 (AAIGYGPGVLFGLAIGHVVAL) threads the bilayer. Over 751-771 (YKPGWFIKNNGQNRLRGIRHP) the chain is Cytoplasmic.

This sequence belongs to the RLP family.

It localises to the cell membrane. The sequence is that of Receptor like protein 22 from Arabidopsis thaliana (Mouse-ear cress).